Consider the following 152-residue polypeptide: Protein eva-1 homolog A (152 aa).

Residues 1–60 (MRLPLSHSPEHVEMALLSNILAAYSFVSENPERAALYFVSGVCIGLVLTLAALVIRISCH) form a necessary for the localization and biological activity region. A helical membrane pass occupies residues 35–55 (ALYFVSGVCIGLVLTLAALVI). Residues 70–97 (KFLQDRESSSDSSDSEDGSEDTVSDLSV) are disordered. Residues 82 to 92 (SDSEDGSEDTV) are compositionally biased toward acidic residues. The residue at position 106 (T106) is a Phosphothreonine. A Phosphoserine; by FAM20C modification is found at S114.

This sequence belongs to the EVA1 family. Expressed in lung, kidney, liver, pancreas, placenta, but not in heart and skeletal muscle.

Its subcellular location is the endoplasmic reticulum membrane. It is found in the lysosome membrane. Functionally, acts as a regulator of programmed cell death, mediating both autophagy and apoptosis. The chain is Protein eva-1 homolog A (EVA1A) from Homo sapiens (Human).